The sequence spans 231 residues: Sensory transduction protein BceR (231 aa).

The region spanning 3-116 (KLLLIEDDES…VLIAKIQAMF (114 aa)) is the Response regulatory domain. The residue at position 52 (D52) is a 4-aspartylphosphate. The ompR/PhoB-type DNA-binding region spans 127–225 (STIKTWCGAA…KVGQGYIAKE (99 aa)).

Post-translationally, phosphorylated by BceS.

It is found in the cytoplasm. In terms of biological role, member of the two-component regulatory system BceS/BceR involved in the regulation of bacitracin resistance. When activated by BceS, binds to the upstream region of the bceAB promoter and up-regulates the expression of these two genes. This is Sensory transduction protein BceR (bceR) from Bacillus subtilis (strain 168).